The following is an 861-amino-acid chain: 1,4-alpha-glucan-branching enzyme (861 aa).

2 residues coordinate (1,4-alpha-D-glucosyl)n: Trp173 and Lys208. The active-site Nucleophile is the Asp429. Glu484 acts as the Proton donor in catalysis.

This sequence belongs to the glycosyl hydrolase 13 family. GlgB subfamily. In terms of assembly, monomer.

It localises to the plastid. The protein localises to the chloroplast. The protein resides in the amyloplast. It carries out the reaction Transfers a segment of a (1-&gt;4)-alpha-D-glucan chain to a primary hydroxy group in a similar glucan chain.. The protein operates within glycan biosynthesis; starch biosynthesis. In terms of biological role, catalyzes the formation of the alpha-1,6-glucosidic linkages in starch by scission of a 1,4-alpha-linked oligosaccharide from growing alpha-1,4-glucan chains and the subsequent attachment of the oligosaccharide to the alpha-1,6 position. The protein is 1,4-alpha-glucan-branching enzyme (SBE1) of Solanum tuberosum (Potato).